A 510-amino-acid chain; its full sequence is ATP synthase subunit alpha (510 aa).

169–176 serves as a coordination point for ATP; it reads GDRQTGKS.

It belongs to the ATPase alpha/beta chains family. F-type ATPases have 2 components, CF(1) - the catalytic core - and CF(0) - the membrane proton channel. CF(1) has five subunits: alpha(3), beta(3), gamma(1), delta(1), epsilon(1). CF(0) has three main subunits: a(1), b(2) and c(9-12). The alpha and beta chains form an alternating ring which encloses part of the gamma chain. CF(1) is attached to CF(0) by a central stalk formed by the gamma and epsilon chains, while a peripheral stalk is formed by the delta and b chains.

Its subcellular location is the cell membrane. The catalysed reaction is ATP + H2O + 4 H(+)(in) = ADP + phosphate + 5 H(+)(out). Its function is as follows. Produces ATP from ADP in the presence of a proton gradient across the membrane. The alpha chain is a regulatory subunit. In Wigglesworthia glossinidia brevipalpis, this protein is ATP synthase subunit alpha.